Consider the following 275-residue polypeptide: MAPIGDDASQTLHDLVNKLESRVKELEDKLAHAAGGPAPAASESVRMILMGPPGAGKGTQAPKIKEKFSCCHLATGDMLRSQVAKKTPLGREAKKIMDQGGLVSDEIVIGMIKAELEGNSECKGGFILDGFPRTVVQAERLDAMLAERNQKLQHAVELQIDDSLLVSRITGRLVHPASGRSYHRVFNPPKADMKDDITGEPLVSRSDDNADALKKRLVTYHAQTAPVVGYYQKTGIWSGIDASQEPGAVWKSLLGVFDKQKGANGSILSKITGRS.

G54–T59 lines the ATP pocket. The tract at residues A74–V103 is NMP. AMP is bound by residues T75, R80, G101–V103, G130–R133, and Q137. An LID region spans residues G171–D208. Residues R172 and S181–Y182 each bind ATP. 2 residues coordinate AMP: R205 and R216. Q244 contributes to the ATP binding site.

The protein belongs to the adenylate kinase family. AK2 subfamily. As to quaternary structure, monomer.

It localises to the cytoplasm. Its subcellular location is the cytosol. It is found in the mitochondrion intermembrane space. It carries out the reaction AMP + ATP = 2 ADP. Its function is as follows. Catalyzes the reversible transfer of the terminal phosphate group between ATP and AMP. Plays an important role in cellular energy homeostasis and in adenine nucleotide metabolism. Adenylate kinase activity is critical for regulation of the phosphate utilization and the AMP de novo biosynthesis pathways. The chain is Adenylate kinase (adk1) from Botryotinia fuckeliana (strain B05.10) (Noble rot fungus).